Consider the following 201-residue polypeptide: Proteasome subunit beta 1 (201 aa).

Residue Met1 is a propeptide, removed in mature form; by autocatalysis. Residue Thr2 is the Nucleophile of the active site.

It belongs to the peptidase T1B family. The 20S proteasome core is composed of 14 alpha and 14 beta subunits that assemble into four stacked heptameric rings, resulting in a barrel-shaped structure. The two inner rings, each composed of seven catalytic beta subunits, are sandwiched by two outer rings, each composed of seven alpha subunits. The catalytic chamber with the active sites is on the inside of the barrel. Has a gated structure, the ends of the cylinder being occluded by the N-termini of the alpha-subunits. Is capped at one or both ends by the proteasome regulatory ATPase, PAN.

It is found in the cytoplasm. It carries out the reaction Cleavage of peptide bonds with very broad specificity.. With respect to regulation, the formation of the proteasomal ATPase PAN-20S proteasome complex, via the docking of the C-termini of PAN into the intersubunit pockets in the alpha-rings, triggers opening of the gate for substrate entry. Interconversion between the open-gate and close-gate conformations leads to a dynamic regulation of the 20S proteasome proteolysis activity. Component of the proteasome core, a large protease complex with broad specificity involved in protein degradation. The sequence is that of Proteasome subunit beta 1 from Pyrobaculum calidifontis (strain DSM 21063 / JCM 11548 / VA1).